A 283-amino-acid polypeptide reads, in one-letter code: MPHRKERPSGSSLHAHGSTGTAEGGSMSRLSLTRSPVSPLAAQGIPLPAQLTKSNAPVHIDVGGHMYTSSLATLTKYPDSRISRLFNGTEPIVLDSLKQHYFIDRDGEIFRYVLSFLRTSKLLLPDDFKDFSLLYEEARYYQLQPMVRELERWQQEQEQRRRSRACDCLVVRVTPDLGERIALSGEKALIEEVFPETGDVMCNSVNAGWNQDPTHVIRFPLNGYCRLNSVQVLERLFQRGFSVAASCGGGVDSSQFSEYVLCREERRPQPTPTAVRIKQEPLD.

The interval 1 to 33 (MPHRKERPSGSSLHAHGSTGTAEGGSMSRLSLT) is disordered. A phosphoserine mark is found at serine 31, serine 35, and serine 38. The BTB domain maps to 56–126 (APVHIDVGGH…LRTSKLLLPD (71 aa)).

As to quaternary structure, forms oligomers, predominantly homopentamers. Interacts with KCTD1, probably forming heteropentamers depending on its abundance in a cell-type dependent manner. Interacts with TFAP2A; this interaction inhibits TFAP2A transcriptional activation.

Its subcellular location is the nucleus. In terms of biological role, during embryonic development, interferes with neural crest formation. Inhibits AP2 transcriptional activity by interaction with its activation domain. This Bos taurus (Bovine) protein is BTB/POZ domain-containing protein KCTD15 (KCTD15).